The following is a 362-amino-acid chain: DNA replication and repair protein RecF (362 aa).

30–37 contacts ATP; sequence GDNGAGKT.

It belongs to the RecF family.

It is found in the cytoplasm. Its function is as follows. The RecF protein is involved in DNA metabolism; it is required for DNA replication and normal SOS inducibility. RecF binds preferentially to single-stranded, linear DNA. It also seems to bind ATP. The chain is DNA replication and repair protein RecF from Xanthomonas oryzae pv. oryzae (strain MAFF 311018).